The chain runs to 82 residues: Cytochrome b559 subunit alpha (82 aa).

The helical transmembrane segment at 21–35 (VIHSITIPALFIAGW) threads the bilayer. Position 23 (H23) interacts with heme.

Belongs to the PsbE/PsbF family. In terms of assembly, heterodimer of an alpha subunit and a beta subunit. PSII is composed of 1 copy each of membrane proteins PsbA, PsbB, PsbC, PsbD, PsbE, PsbF, PsbH, PsbI, PsbJ, PsbK, PsbL, PsbM, PsbT, PsbX, PsbY, PsbZ, Psb30/Ycf12, peripheral proteins PsbO, CyanoQ (PsbQ), PsbU, PsbV and a large number of cofactors. It forms dimeric complexes. The cofactor is heme b.

It is found in the cellular thylakoid membrane. Its function is as follows. This b-type cytochrome is tightly associated with the reaction center of photosystem II (PSII). PSII is a light-driven water:plastoquinone oxidoreductase that uses light energy to abstract electrons from H(2)O, generating O(2) and a proton gradient subsequently used for ATP formation. It consists of a core antenna complex that captures photons, and an electron transfer chain that converts photonic excitation into a charge separation. The sequence is that of Cytochrome b559 subunit alpha from Nostoc sp. (strain PCC 7120 / SAG 25.82 / UTEX 2576).